A 698-amino-acid polypeptide reads, in one-letter code: Long-chain-fatty-acid--CoA ligase 1 (698 aa).

M1 is subject to N-acetylmethionine. 3'-nitrotyrosine is present on Y9. The chain crosses the membrane as a helical; Signal-anchor for type III membrane protein span at residues 25 to 45; that stretch reads LPTNTLMGFGAFAALTTFWYA. Topologically, residues 46 to 698 are cytoplasmic; that stretch reads TRPKPLKPPC…IDDLYSTIKV (653 aa). Y84 carries the post-translational modification Phosphotyrosine. S135 is a glycosylation site (O-linked (GlcNAc) serine). 3 positions are modified to N6-acetyllysine: K207, K356, and K386. S620 bears the Phosphoserine mark. K632 is modified (N6-acetyllysine).

This sequence belongs to the ATP-dependent AMP-binding enzyme family. Requires Mg(2+) as cofactor. As to expression, highly expressed in liver, heart, skeletal muscle, kidney and erythroid cells, and to a lesser extent in brain, lung, placenta and pancreas.

It is found in the mitochondrion outer membrane. It localises to the peroxisome membrane. The protein resides in the microsome membrane. Its subcellular location is the endoplasmic reticulum membrane. It catalyses the reaction a long-chain fatty acid + ATP + CoA = a long-chain fatty acyl-CoA + AMP + diphosphate. The catalysed reaction is (5Z,8Z,11Z,14Z)-eicosatetraenoate + ATP + CoA = (5Z,8Z,11Z,14Z)-eicosatetraenoyl-CoA + AMP + diphosphate. It carries out the reaction 3,7,11,15-tetramethylhexadecanoate + ATP + CoA = phytanoyl-CoA + AMP + diphosphate. The enzyme catalyses hexadecanoate + ATP + CoA = hexadecanoyl-CoA + AMP + diphosphate. It catalyses the reaction (E)-hexadec-2-enoate + ATP + CoA = (2E)-hexadecenoyl-CoA + AMP + diphosphate. The catalysed reaction is 2,6,10,14-tetramethylpentadecanoate + ATP + CoA = pristanoyl-CoA + AMP + diphosphate. It carries out the reaction 14,15-epoxy-(5Z,8Z,11Z)-eicosatrienoate + ATP + CoA = 14,15-epoxy-(5Z,8Z,11Z)-eicosatrienoyl-CoA + AMP + diphosphate. The enzyme catalyses 5-hydroxy-(6E,8Z,11Z,14Z)-eicosatetraenoate + ATP + CoA = 5-hydroxy-(6E,8Z,11Z,14Z)-eicosatetraenoyl-CoA + AMP + diphosphate. It catalyses the reaction 12-hydroxy-(5Z,8Z,10E,14Z)-eicosatetraenoate + ATP + CoA = 12-hydroxy-(5Z,8Z,10E,14Z)-eicosatetraenoyl-CoA + AMP + diphosphate. The catalysed reaction is 15-hydroxy-(5Z,8Z,11Z,13E)-eicosatetraenoate + ATP + CoA = 15-hydroxy-(5Z,8Z,11Z,13E)-eicosatetraenoyl-CoA + AMP + diphosphate. It carries out the reaction (9Z)-octadecenoate + ATP + CoA = (9Z)-octadecenoyl-CoA + AMP + diphosphate. Its activity is regulated as follows. Inhibited at high temperature and by arachidonate. Functionally, catalyzes the conversion of long-chain fatty acids to their active form acyl-CoAs for both synthesis of cellular lipids, and degradation via beta-oxidation. Preferentially uses palmitoleate, oleate and linoleate. Preferentially activates arachidonate than epoxyeicosatrienoic acids (EETs) or hydroxyeicosatrienoic acids (HETEs). The protein is Long-chain-fatty-acid--CoA ligase 1 of Homo sapiens (Human).